Reading from the N-terminus, the 398-residue chain is Digeranylgeranylglycerophospholipid reductase (398 aa).

Residues A15, E34, C45, A46, G48, R99, A123, D280, G292, and I293 each coordinate FAD. V372 contacts a 2,3-bis-O-(geranylgeranyl)-sn-glycerol 1-phospholipid.

It belongs to the geranylgeranyl reductase family. DGGGPL reductase subfamily. FAD serves as cofactor.

It catalyses the reaction a 2,3-bis-O-phytanyl-sn-glycerol 1-phospholipid + 8 oxidized 2[4Fe-4S]-[ferredoxin] = a 2,3-bis-O-(geranylgeranyl)-sn-glycerol 1-phospholipid + 8 reduced 2[4Fe-4S]-[ferredoxin] + 16 H(+). The enzyme catalyses 2,3-bis-O-(phytanyl)-sn-glycerol 1-phosphate + 8 oxidized 2[4Fe-4S]-[ferredoxin] = 2,3-bis-O-(geranylgeranyl)-sn-glycerol 1-phosphate + 8 reduced 2[4Fe-4S]-[ferredoxin] + 16 H(+). The catalysed reaction is a 2,3-bis-O-phytanyl-sn-glycerol 1-phospholipid + 8 A = a 2,3-bis-O-(geranylgeranyl)-sn-glycerol 1-phospholipid + 8 AH2. It carries out the reaction CDP-2,3-bis-O-(geranylgeranyl)-sn-glycerol + 8 AH2 = CDP-2,3-bis-O-(phytanyl)-sn-glycerol + 8 A. It catalyses the reaction archaetidylserine + 8 AH2 = 2,3-bis-O-phytanyl-sn-glycero-3-phospho-L-serine + 8 A. The protein operates within membrane lipid metabolism; glycerophospholipid metabolism. Its function is as follows. Is involved in the reduction of 2,3-digeranylgeranylglycerophospholipids (unsaturated archaeols) into 2,3-diphytanylglycerophospholipids (saturated archaeols) in the biosynthesis of archaeal membrane lipids. Catalyzes the formation of archaetidic acid (2,3-di-O-phytanyl-sn-glyceryl phosphate) from 2,3-di-O-geranylgeranylglyceryl phosphate (DGGGP) via the hydrogenation of each double bond of the isoprenoid chains. Is also probably able to reduce double bonds of geranyl groups in CDP-2,3-bis-O-(geranylgeranyl)-sn-glycerol and archaetidylserine, thus acting at various stages in the biosynthesis of archaeal membrane lipids. The sequence is that of Digeranylgeranylglycerophospholipid reductase from Methanoculleus marisnigri (strain ATCC 35101 / DSM 1498 / JR1).